A 404-amino-acid chain; its full sequence is Argininosuccinate synthase (404 aa).

9 to 17 (AYSGGLDTS) contacts ATP. Tyr-86 contacts L-citrulline. Gly-116 provides a ligand contact to ATP. Thr-118, Asn-122, and Asp-123 together coordinate L-aspartate. Residue Asn-122 participates in L-citrulline binding. Residues Arg-126, Ser-174, Ser-183, Glu-259, and Tyr-271 each contribute to the L-citrulline site.

The protein belongs to the argininosuccinate synthase family. Type 1 subfamily. As to quaternary structure, homotetramer.

The protein localises to the cytoplasm. It carries out the reaction L-citrulline + L-aspartate + ATP = 2-(N(omega)-L-arginino)succinate + AMP + diphosphate + H(+). It functions in the pathway amino-acid biosynthesis; L-arginine biosynthesis; L-arginine from L-ornithine and carbamoyl phosphate: step 2/3. This chain is Argininosuccinate synthase, found in Listeria innocua serovar 6a (strain ATCC BAA-680 / CLIP 11262).